A 187-amino-acid polypeptide reads, in one-letter code: Transmembrane protein 212 (187 aa).

Helical transmembrane passes span 11–31 (TLVT…FPVF), 42–62 (VWIA…SLVL), 76–96 (AVFT…TVAL), 106–126 (FYSF…TFPF), and 148–168 (LQVL…AVFI).

The protein localises to the membrane. The polypeptide is Transmembrane protein 212 (Tmem212) (Mus musculus (Mouse)).